Reading from the N-terminus, the 483-residue chain is MGFTLAIVGRPNVGKSTLFNRLVGRKLALVDDLPGVTRDRRIHDAKLYDLKFQVIDTAGLEEAANDSLEARMRAQTEAAISEADAVLFVIDAKAGITPADSTFAEAVRRSGKPVVLVANKAEARGSEAGMYDAFQLGLGEPCPISAEHGQGMPDLRDAIVELLGEERVFAEERQEEAADEVFTPAAVGALVGDDIEDPDAEEIPAYDATKPLRIAIVGRPNAGKSTLINTMLGEDRLLTGPEAGITRDSISADWEWHGRKIKLFDTAGMRRKARVQEKLEKLSVADGLRAIRFAEVVIIVLDATIPFEKQDLQIADLIIREGRAPVIAFNKWDLIEDRQMVLADLYEKTARLLPQVRGLRAVPISGERGQGIDKLMENVVKTHEIWNRRISTGRLNRWLEGVIAHQPPPAVSGRRLKVKYMTQVKTRPPGFVVSCSRPDAMPQSYVRYLINGLRETFDMPGVPIRLSLRTSDNPFAGRAKKKK.

EngA-type G domains are found at residues 3 to 167 and 212 to 387; these read FTLA…GEER and LRIA…EIWN. GTP is bound by residues 9-16, 56-60, 119-122, 218-225, 265-269, and 330-333; these read GRPNVGKS, DTAGL, NKAE, GRPNAGKS, DTAGM, and NKWD. The KH-like domain occupies 388 to 472; that stretch reads RRISTGRLNR…PIRLSLRTSD (85 aa).

It belongs to the TRAFAC class TrmE-Era-EngA-EngB-Septin-like GTPase superfamily. EngA (Der) GTPase family. In terms of assembly, associates with the 50S ribosomal subunit.

GTPase that plays an essential role in the late steps of ribosome biogenesis. The chain is GTPase Der from Brucella suis biovar 1 (strain 1330).